Reading from the N-terminus, the 331-residue chain is Ketol-acid reductoisomerase (NADP(+)) (331 aa).

The KARI N-terminal Rossmann domain maps to 2–182 (AQLFYDSDAD…GGTRAGILET (181 aa)). NADP(+) contacts are provided by residues 25 to 28 (YGSQ), Ser51, Ser53, and 83 to 86 (DEFQ). His108 is a catalytic residue. NADP(+) is bound at residue Gly134. The 146-residue stretch at 183 to 328 (NFKEETETDL…KGLRSMFSWL (146 aa)) folds into the KARI C-terminal knotted domain. Residues Asp191, Glu195, Glu227, and Glu231 each contribute to the Mg(2+) site. Ser252 lines the substrate pocket.

Belongs to the ketol-acid reductoisomerase family. Mg(2+) serves as cofactor.

It catalyses the reaction (2R)-2,3-dihydroxy-3-methylbutanoate + NADP(+) = (2S)-2-acetolactate + NADPH + H(+). The enzyme catalyses (2R,3R)-2,3-dihydroxy-3-methylpentanoate + NADP(+) = (S)-2-ethyl-2-hydroxy-3-oxobutanoate + NADPH + H(+). It functions in the pathway amino-acid biosynthesis; L-isoleucine biosynthesis; L-isoleucine from 2-oxobutanoate: step 2/4. The protein operates within amino-acid biosynthesis; L-valine biosynthesis; L-valine from pyruvate: step 2/4. Its function is as follows. Involved in the biosynthesis of branched-chain amino acids (BCAA). Catalyzes an alkyl-migration followed by a ketol-acid reduction of (S)-2-acetolactate (S2AL) to yield (R)-2,3-dihydroxy-isovalerate. In the isomerase reaction, S2AL is rearranged via a Mg-dependent methyl migration to produce 3-hydroxy-3-methyl-2-ketobutyrate (HMKB). In the reductase reaction, this 2-ketoacid undergoes a metal-dependent reduction by NADPH to yield (R)-2,3-dihydroxy-isovalerate. The sequence is that of Ketol-acid reductoisomerase (NADP(+)) from Synechococcus sp. (strain CC9902).